Reading from the N-terminus, the 333-residue chain is DNA-directed RNA polymerase subunit alpha (333 aa).

Residues 1–234 are alpha N-terminal domain (alpha-NTD); sequence MQISVNEFLT…QQLAAFVDLK (234 aa). The alpha C-terminal domain (alpha-CTD) stretch occupies residues 248–333; sequence IDPILLRPVD…SLKKDDKATA (86 aa).

Belongs to the RNA polymerase alpha chain family. As to quaternary structure, homodimer. The RNAP catalytic core consists of 2 alpha, 1 beta, 1 beta' and 1 omega subunit. When a sigma factor is associated with the core the holoenzyme is formed, which can initiate transcription.

The enzyme catalyses RNA(n) + a ribonucleoside 5'-triphosphate = RNA(n+1) + diphosphate. In terms of biological role, DNA-dependent RNA polymerase catalyzes the transcription of DNA into RNA using the four ribonucleoside triphosphates as substrates. The sequence is that of DNA-directed RNA polymerase subunit alpha from Pseudomonas syringae pv. tomato (strain ATCC BAA-871 / DC3000).